The sequence spans 275 residues: Large ribosomal subunit protein uL2c (275 aa).

Disordered regions lie at residues 32-53 (SLSK…TCRH) and 218-242 (PTVR…APIG).

This sequence belongs to the universal ribosomal protein uL2 family. In terms of assembly, part of the 50S ribosomal subunit.

The protein resides in the plastid. It is found in the chloroplast. The polypeptide is Large ribosomal subunit protein uL2c (rpl2) (Tetradesmus obliquus (Green alga)).